Here is a 312-residue protein sequence, read N- to C-terminus: Homoserine kinase (312 aa).

Position 94–104 (94–104) interacts with ATP; the sequence is PLGRGLGSSAA.

The protein belongs to the GHMP kinase family. Homoserine kinase subfamily.

It is found in the cytoplasm. The catalysed reaction is L-homoserine + ATP = O-phospho-L-homoserine + ADP + H(+). It participates in amino-acid biosynthesis; L-threonine biosynthesis; L-threonine from L-aspartate: step 4/5. In terms of biological role, catalyzes the ATP-dependent phosphorylation of L-homoserine to L-homoserine phosphate. In Caldanaerobacter subterraneus subsp. tengcongensis (strain DSM 15242 / JCM 11007 / NBRC 100824 / MB4) (Thermoanaerobacter tengcongensis), this protein is Homoserine kinase.